Here is a 697-residue protein sequence, read N- to C-terminus: Elongation factor G (697 aa).

Residues 8 to 282 (EDYRNIGIMA…AIVDYLPSPL (275 aa)) form the tr-type G domain. GTP-binding positions include 17–24 (AHIDAGKT), 81–85 (DTPGH), and 135–138 (NKMD).

Belongs to the TRAFAC class translation factor GTPase superfamily. Classic translation factor GTPase family. EF-G/EF-2 subfamily.

It localises to the cytoplasm. Its function is as follows. Catalyzes the GTP-dependent ribosomal translocation step during translation elongation. During this step, the ribosome changes from the pre-translocational (PRE) to the post-translocational (POST) state as the newly formed A-site-bound peptidyl-tRNA and P-site-bound deacylated tRNA move to the P and E sites, respectively. Catalyzes the coordinated movement of the two tRNA molecules, the mRNA and conformational changes in the ribosome. The chain is Elongation factor G from Metamycoplasma arthritidis (strain 158L3-1) (Mycoplasma arthritidis).